The sequence spans 379 residues: 3-dehydroquinate synthase (379 aa).

NAD(+) contacts are provided by residues 67–72 (SGEKNK), 101–105 (GVVLD), 125–126 (TT), K138, and K147. Positions 180, 242, and 258 each coordinate Zn(2+).

Belongs to the sugar phosphate cyclases superfamily. Dehydroquinate synthase family. Requires NAD(+) as cofactor. Co(2+) is required as a cofactor. It depends on Zn(2+) as a cofactor.

Its subcellular location is the cytoplasm. It catalyses the reaction 7-phospho-2-dehydro-3-deoxy-D-arabino-heptonate = 3-dehydroquinate + phosphate. Its pathway is metabolic intermediate biosynthesis; chorismate biosynthesis; chorismate from D-erythrose 4-phosphate and phosphoenolpyruvate: step 2/7. In terms of biological role, catalyzes the conversion of 3-deoxy-D-arabino-heptulosonate 7-phosphate (DAHP) to dehydroquinate (DHQ). This is 3-dehydroquinate synthase from Chlamydia abortus (strain DSM 27085 / S26/3) (Chlamydophila abortus).